A 148-amino-acid polypeptide reads, in one-letter code: UPF0756 membrane protein YeaL (148 aa).

Transmembrane regions (helical) follow at residues 14-34, 51-71, 86-106, and 121-141; these read ALGF…LIIV, LSIG…SGTL, LVAI…VTLM, and VLGV…AGLV.

Belongs to the UPF0756 family.

Its subcellular location is the cell membrane. The chain is UPF0756 membrane protein YeaL from Escherichia coli O127:H6 (strain E2348/69 / EPEC).